The primary structure comprises 188 residues: Acireductone dioxygenase (188 aa).

Fe(2+)-binding residues include H97, H99, E103, and H141. H97, H99, E103, and H141 together coordinate Ni(2+).

The protein belongs to the acireductone dioxygenase (ARD) family. Monomer. Fe(2+) serves as cofactor. Ni(2+) is required as a cofactor.

The catalysed reaction is 1,2-dihydroxy-5-(methylsulfanyl)pent-1-en-3-one + O2 = 3-(methylsulfanyl)propanoate + CO + formate + 2 H(+). It carries out the reaction 1,2-dihydroxy-5-(methylsulfanyl)pent-1-en-3-one + O2 = 4-methylsulfanyl-2-oxobutanoate + formate + 2 H(+). It participates in amino-acid biosynthesis; L-methionine biosynthesis via salvage pathway; L-methionine from S-methyl-5-thio-alpha-D-ribose 1-phosphate: step 5/6. Catalyzes 2 different reactions between oxygen and the acireductone 1,2-dihydroxy-3-keto-5-methylthiopentene (DHK-MTPene) depending upon the metal bound in the active site. Fe-containing acireductone dioxygenase (Fe-ARD) produces formate and 2-keto-4-methylthiobutyrate (KMTB), the alpha-ketoacid precursor of methionine in the methionine recycle pathway. Ni-containing acireductone dioxygenase (Ni-ARD) produces methylthiopropionate, carbon monoxide and formate, and does not lie on the methionine recycle pathway. In Gluconobacter oxydans (strain 621H) (Gluconobacter suboxydans), this protein is Acireductone dioxygenase.